Here is a 273-residue protein sequence, read N- to C-terminus: Homeobox protein Nkx-2.2 (273 aa).

2 disordered regions span residues 1-56 and 91-131; these read MSLT…LDAV and AASA…KRKR. A compositionally biased stretch (acidic residues) spans 20–38; that stretch reads DTNDEEGSVAEGPEEESEG. Residues 128–187 constitute a DNA-binding region (homeobox); sequence KRKRRVLFSKAQTYELERRFRQQRYLSAPEREHLASLIRLTPTQVKIWFQNHRYKMKRAR.

Belongs to the NK-2 homeobox family. Interacts with OLIG2.

It is found in the nucleus. In terms of biological role, transcriptional activator involved in the development of insulin-producting beta cells in the endocrine pancreas. May also be involved in specifying diencephalic neuromeric boundaries, and in controlling the expression of genes that play a role in axonal guidance. Binds to elements within the NEUROD1 promoter. The protein is Homeobox protein Nkx-2.2 (NKX2-2) of Mesocricetus auratus (Golden hamster).